We begin with the raw amino-acid sequence, 256 residues long: Ribosomal RNA small subunit methyltransferase A (256 aa).

The S-adenosyl-L-methionine site is built by H12, L14, G39, E60, D81, and N103.

It belongs to the class I-like SAM-binding methyltransferase superfamily. rRNA adenine N(6)-methyltransferase family. RsmA subfamily.

The protein localises to the cytoplasm. The enzyme catalyses adenosine(1518)/adenosine(1519) in 16S rRNA + 4 S-adenosyl-L-methionine = N(6)-dimethyladenosine(1518)/N(6)-dimethyladenosine(1519) in 16S rRNA + 4 S-adenosyl-L-homocysteine + 4 H(+). Functionally, specifically dimethylates two adjacent adenosines (A1518 and A1519) in the loop of a conserved hairpin near the 3'-end of 16S rRNA in the 30S particle. May play a critical role in biogenesis of 30S subunits. The polypeptide is Ribosomal RNA small subunit methyltransferase A (Methylibium petroleiphilum (strain ATCC BAA-1232 / LMG 22953 / PM1)).